Consider the following 302-residue polypeptide: Protoheme IX farnesyltransferase (302 aa).

9 helical membrane passes run 24-44 (VVSL…FSGY), 48-68 (FFSV…AGAL), 97-117 (AALV…ELAV), 120-140 (LSAV…TVYL), 147-167 (NIVV…AAVA), 174-194 (SLVL…ALAL), 221-241 (ILCY…LRFS), 245-265 (YMIV…NVYL), and 282-302 (FLLF…GMLI).

Belongs to the UbiA prenyltransferase family. Protoheme IX farnesyltransferase subfamily.

Its subcellular location is the cell inner membrane. The catalysed reaction is heme b + (2E,6E)-farnesyl diphosphate + H2O = Fe(II)-heme o + diphosphate. It participates in porphyrin-containing compound metabolism; heme O biosynthesis; heme O from protoheme: step 1/1. In terms of biological role, converts heme B (protoheme IX) to heme O by substitution of the vinyl group on carbon 2 of heme B porphyrin ring with a hydroxyethyl farnesyl side group. In Neorickettsia sennetsu (strain ATCC VR-367 / Miyayama) (Ehrlichia sennetsu), this protein is Protoheme IX farnesyltransferase.